We begin with the raw amino-acid sequence, 35 residues long: Probable endonuclease 4 (35 aa).

A Zn(2+)-binding site is contributed by Glu15.

It belongs to the AP endonuclease 2 family. Requires Zn(2+) as cofactor.

It catalyses the reaction Endonucleolytic cleavage to 5'-phosphooligonucleotide end-products.. Functionally, endonuclease IV plays a role in DNA repair. It cleaves phosphodiester bonds at apurinic or apyrimidinic (AP) sites, generating a 3'-hydroxyl group and a 5'-terminal sugar phosphate. The polypeptide is Probable endonuclease 4 (nfo) (Yersinia enterocolitica).